Consider the following 378-residue polypeptide: Queuine tRNA-ribosyltransferase (378 aa).

Asp90 acts as the Proton acceptor in catalysis. Substrate contacts are provided by residues 90-94 (DSGGF), Asp144, Gln188, and Gly220. The RNA binding stretch occupies residues 251 to 257 (GVGTPED). Asp270 functions as the Nucleophile in the catalytic mechanism. An RNA binding; important for wobble base 34 recognition region spans residues 275-279 (TRNAR). Zn(2+)-binding residues include Cys308, Cys310, Cys313, and His339.

Belongs to the queuine tRNA-ribosyltransferase family. Homodimer. Within each dimer, one monomer is responsible for RNA recognition and catalysis, while the other monomer binds to the replacement base PreQ1. Zn(2+) serves as cofactor.

The enzyme catalyses 7-aminomethyl-7-carbaguanine + guanosine(34) in tRNA = 7-aminomethyl-7-carbaguanosine(34) in tRNA + guanine. The protein operates within tRNA modification; tRNA-queuosine biosynthesis. Functionally, catalyzes the base-exchange of a guanine (G) residue with the queuine precursor 7-aminomethyl-7-deazaguanine (PreQ1) at position 34 (anticodon wobble position) in tRNAs with GU(N) anticodons (tRNA-Asp, -Asn, -His and -Tyr). Catalysis occurs through a double-displacement mechanism. The nucleophile active site attacks the C1' of nucleotide 34 to detach the guanine base from the RNA, forming a covalent enzyme-RNA intermediate. The proton acceptor active site deprotonates the incoming PreQ1, allowing a nucleophilic attack on the C1' of the ribose to form the product. After dissociation, two additional enzymatic reactions on the tRNA convert PreQ1 to queuine (Q), resulting in the hypermodified nucleoside queuosine (7-(((4,5-cis-dihydroxy-2-cyclopenten-1-yl)amino)methyl)-7-deazaguanosine). The sequence is that of Queuine tRNA-ribosyltransferase from Nautilia profundicola (strain ATCC BAA-1463 / DSM 18972 / AmH).